The following is a 1091-amino-acid chain: Error-prone DNA polymerase 1 (1091 aa).

A compositionally biased stretch (basic and acidic residues) spans 1051–1064; that stretch reads RGDEFHHGMPDDHR. The disordered stretch occupies residues 1051-1080; that stretch reads RGDEFHHGMPDDHRAIRKRPPPSNHDDDEV.

Belongs to the DNA polymerase type-C family. DnaE2 subfamily.

The protein resides in the cytoplasm. The enzyme catalyses DNA(n) + a 2'-deoxyribonucleoside 5'-triphosphate = DNA(n+1) + diphosphate. Its function is as follows. DNA polymerase involved in damage-induced mutagenesis and translesion synthesis (TLS). It is not the major replicative DNA polymerase. This Agrobacterium fabrum (strain C58 / ATCC 33970) (Agrobacterium tumefaciens (strain C58)) protein is Error-prone DNA polymerase 1.